The following is a 479-amino-acid chain: Glutamate receptor U1 (479 aa).

The N-terminal stretch at 1-17 (MEKSLLFLFAVTLLSVG) is a signal peptide. Over 18–163 (CTDAGESKGS…LFGFLTPFSK (146 aa)) the chain is Extracellular. N-linked (GlcNAc...) asparagine glycosylation occurs at Asn-79. The helical transmembrane segment at 164-184 (ETWIGILVAYMVTSLCLFLVG) threads the bilayer. At 185-229 (RLSPCEWTELSTEQNNFTFLNSLWFGAGAFTLQGAEPHPKSVSAR) the chain is on the cytoplasmic side. A helical membrane pass occupies residues 230 to 250 (IIAVIWWIFSIVLVAAYIASF). Residues 251–414 (AAFLNSDSVQ…AGWNPVQPHT (164 aa)) lie on the Extracellular side of the membrane. Asn-282 is a glycosylation site (N-linked (GlcNAc...) asparagine). The helical transmembrane segment at 415-435 (LGGIFLILGIGLALGVIAALI) threads the bilayer. Over 436-479 (ELVLKARNNADQQKKSCCSAFSEEMGERLGTNKENQGAVDSVKS) the chain is Cytoplasmic.

This sequence belongs to the glutamate-gated ion channel (TC 1.A.10.1) family. In terms of assembly, homomeric.

The protein resides in the cell membrane. The protein localises to the postsynaptic cell membrane. Its function is as follows. Receptor for glutamate. L-glutamate acts as an excitatory neurotransmitter at many synapses in the central nervous system. The postsynaptic actions of Glu are mediated by a variety of receptors that are named according to their selective agonists. This receptor binds domoate &gt; kainate &gt; AMPA &gt; NBQX &gt; glutamate. The chain is Glutamate receptor U1 (kbp) from Xenopus laevis (African clawed frog).